We begin with the raw amino-acid sequence, 341 residues long: MIKVGINGYGTIGKRVAYAASIQDDIHVSGIVKNTPDYMAYLASRSFNIYVPDDDKIKEFEDHGIKVKGTLNDLMESSDIIVDATPEGMGMENIKIYKKKRVKAIFQGGEKSNIGDASFNAYSNYNESFKREYTRVVSCNTTALARTLYPILNDYGIENLNVTLIRRATDPNDNRKGPINAIEPSMSFPSHHADDLKTVLNLNNVYTVALKAPTTLMHVHSIEVLLKDDAKIDDIMESWLKYNRILLIEGKDNFKSTAQIMDMARELRRDRGDLYEIAIWRDSVKVIDKRLYYVQAVHQESDVIPENIDAIRSLSGIDKNESIEKTDKSLRISGGIFYGKE.

NAD(+) is bound by residues threonine 11 to isoleucine 12 and glycine 109. Residue serine 138–asparagine 140 coordinates D-glyceraldehyde 3-phosphate. Residue cysteine 139 is the Nucleophile of the active site. Arginine 167 contacts NAD(+). Residues threonine 169 and histidine 192–alanine 193 each bind D-glyceraldehyde 3-phosphate. Glutamine 299 is a binding site for NAD(+).

This sequence belongs to the glyceraldehyde-3-phosphate dehydrogenase family. Homotetramer.

Its subcellular location is the cytoplasm. The catalysed reaction is D-glyceraldehyde 3-phosphate + phosphate + NADP(+) = (2R)-3-phospho-glyceroyl phosphate + NADPH + H(+). The enzyme catalyses D-glyceraldehyde 3-phosphate + phosphate + NAD(+) = (2R)-3-phospho-glyceroyl phosphate + NADH + H(+). It functions in the pathway carbohydrate degradation; glycolysis; pyruvate from D-glyceraldehyde 3-phosphate: step 1/5. The sequence is that of Glyceraldehyde-3-phosphate dehydrogenase from Picrophilus torridus (strain ATCC 700027 / DSM 9790 / JCM 10055 / NBRC 100828 / KAW 2/3).